The chain runs to 417 residues: Histidine--tRNA ligase (417 aa).

This sequence belongs to the class-II aminoacyl-tRNA synthetase family. Homodimer.

It is found in the cytoplasm. It carries out the reaction tRNA(His) + L-histidine + ATP = L-histidyl-tRNA(His) + AMP + diphosphate + H(+). The polypeptide is Histidine--tRNA ligase (Acetivibrio thermocellus (strain ATCC 27405 / DSM 1237 / JCM 9322 / NBRC 103400 / NCIMB 10682 / NRRL B-4536 / VPI 7372) (Clostridium thermocellum)).